The chain runs to 258 residues: Trifolitoxin-processing protein TfxF (258 aa).

Functionally, the actions of the proteins TfxB, TfxD and TfxF are implicated in the processing of the inactive trifolitoxin (TfxA) precursor into the active peptide. The chain is Trifolitoxin-processing protein TfxF (tfxF) from Rhizobium leguminosarum bv. trifolii.